The sequence spans 339 residues: Ketol-acid reductoisomerase (NADP(+)) (339 aa).

The KARI N-terminal Rossmann domain occupies 1–182 (MRVYYDRDAD…GGGRSGIIET (182 aa)). Residues 24–27 (YGSQ), Lys48, Ser51, Thr53, and 83–86 (DELQ) contribute to the NADP(+) site. The active site involves His108. Gly134 serves as a coordination point for NADP(+). The KARI C-terminal knotted domain occupies 183 to 328 (NFKEECETDL…AKLRGMMPWI (146 aa)). Mg(2+)-binding residues include Asp191, Glu195, Glu227, and Glu231. Ser252 contacts substrate.

It belongs to the ketol-acid reductoisomerase family. The cofactor is Mg(2+).

The catalysed reaction is (2R)-2,3-dihydroxy-3-methylbutanoate + NADP(+) = (2S)-2-acetolactate + NADPH + H(+). It catalyses the reaction (2R,3R)-2,3-dihydroxy-3-methylpentanoate + NADP(+) = (S)-2-ethyl-2-hydroxy-3-oxobutanoate + NADPH + H(+). It functions in the pathway amino-acid biosynthesis; L-isoleucine biosynthesis; L-isoleucine from 2-oxobutanoate: step 2/4. Its pathway is amino-acid biosynthesis; L-valine biosynthesis; L-valine from pyruvate: step 2/4. Functionally, involved in the biosynthesis of branched-chain amino acids (BCAA). Catalyzes an alkyl-migration followed by a ketol-acid reduction of (S)-2-acetolactate (S2AL) to yield (R)-2,3-dihydroxy-isovalerate. In the isomerase reaction, S2AL is rearranged via a Mg-dependent methyl migration to produce 3-hydroxy-3-methyl-2-ketobutyrate (HMKB). In the reductase reaction, this 2-ketoacid undergoes a metal-dependent reduction by NADPH to yield (R)-2,3-dihydroxy-isovalerate. The chain is Ketol-acid reductoisomerase (NADP(+)) from Sinorhizobium fredii (strain NBRC 101917 / NGR234).